Reading from the N-terminus, the 352-residue chain is Nicotinate-nucleotide--dimethylbenzimidazole phosphoribosyltransferase (352 aa).

The Proton acceptor role is filled by Glu-316.

This sequence belongs to the CobT family.

It catalyses the reaction 5,6-dimethylbenzimidazole + nicotinate beta-D-ribonucleotide = alpha-ribazole 5'-phosphate + nicotinate + H(+). It functions in the pathway nucleoside biosynthesis; alpha-ribazole biosynthesis; alpha-ribazole from 5,6-dimethylbenzimidazole: step 1/2. In terms of biological role, catalyzes the synthesis of alpha-ribazole-5'-phosphate from nicotinate mononucleotide (NAMN) and 5,6-dimethylbenzimidazole (DMB). This is Nicotinate-nucleotide--dimethylbenzimidazole phosphoribosyltransferase from Ruminiclostridium cellulolyticum (strain ATCC 35319 / DSM 5812 / JCM 6584 / H10) (Clostridium cellulolyticum).